A 295-amino-acid polypeptide reads, in one-letter code: MNERLQFVVVTGMSGAGKTVAMQSFEDLGFFCVDNMPPALLPKFWELIKENGKISKVALVVDLRSRGFYDQILGLLTGEEEQHNIKTDVVFLDATDEELVARYKETRRAHPLAMDGRVADGVRKERELLSPIKSEAQIVIDTTNMTPRELRSDIFGHFSTNKTIPKFHIEVVSFGYKYGSPIDADIIMDVRFLPNPYYVTELKNKIGTDPAVYDYVMNQPATEEFYTDYLKLLMDIMPGYQKEGKSNLTIAIGCTGGQHRSVAIAERLAKDLSKKYVTNISHRDAHKRKETVNRS.

ATP is bound at residue 12 to 19; the sequence is GMSGAGKT. GTP is bound at residue 62-65; sequence DLRS.

This sequence belongs to the RapZ-like family.

In terms of biological role, displays ATPase and GTPase activities. The protein is Nucleotide-binding protein PEPE_0450 of Pediococcus pentosaceus (strain ATCC 25745 / CCUG 21536 / LMG 10740 / 183-1w).